We begin with the raw amino-acid sequence, 511 residues long: Cytochrome P450 77A2 (511 aa).

Cys-456 serves as a coordination point for heme.

The protein belongs to the cytochrome P450 family. It depends on heme as a cofactor.

The sequence is that of Cytochrome P450 77A2 (CYP77A2) from Solanum melongena (Eggplant).